A 153-amino-acid polypeptide reads, in one-letter code: Putative phosphatidylglycerol/phosphatidylinositol transfer protein DDB_G0285639 (153 aa).

An N-terminal signal peptide occupies residues 1 to 21 (MIIKILLLIISISLFLNISIG). N-linked (GlcNAc...) asparagine glycans are attached at residues asparagine 17, asparagine 61, asparagine 87, asparagine 117, and asparagine 140.

This sequence belongs to the NPC2 family. In terms of assembly, monomer.

In terms of biological role, catalyzes the intermembrane transfer of phosphatidylglycerol and phosphatidylinositol. This Dictyostelium discoideum (Social amoeba) protein is Putative phosphatidylglycerol/phosphatidylinositol transfer protein DDB_G0285639.